Reading from the N-terminus, the 229-residue chain is DNA transfer protein gp7 (229 aa).

The interval 14–36 (EEPLYPEKGGKGGSSSSGAKEAA) is disordered.

This sequence belongs to the podoviruses gp7 family.

Its function is as follows. Component of the phage injection machinery. Required for injection of the phage DNA into the host. The sequence is that of DNA transfer protein gp7 (7) from Salmonella typhimurium (Bacteriophage ST64T).